The chain runs to 241 residues: Proteasome subunit beta type-6 (241 aa).

Residues 1 to 19 (MATIASEYSSEASNTPIEH) constitute a propeptide that is removed on maturation.

Belongs to the peptidase T1B family. In terms of assembly, the 26S proteasome consists of a 20S proteasome core and two 19S regulatory subunits. The 20S proteasome core is composed of 28 subunits that are arranged in four stacked rings, resulting in a barrel-shaped structure. The two end rings are each formed by seven alpha subunits, and the two central rings are each formed by seven beta subunits. The catalytic chamber with the active sites is on the inside of the barrel.

It is found in the cytoplasm. The protein localises to the nucleus. Non-catalytic component of the proteasome which degrades poly-ubiquitinated proteins in the cytoplasm and in the nucleus. It is essential for the regulated turnover of proteins and for the removal of misfolded proteins. The proteasome is a multicatalytic proteinase complex that is characterized by its ability to cleave peptides with Arg, Phe, Tyr, Leu, and Glu adjacent to the leaving group at neutral or slightly basic pH. It has an ATP-dependent proteolytic activity. In Saccharomyces cerevisiae (strain ATCC 204508 / S288c) (Baker's yeast), this protein is Proteasome subunit beta type-6 (PRE7).